A 554-amino-acid polypeptide reads, in one-letter code: Phosphomethylpyrimidine synthase (554 aa).

Substrate is bound by residues Asn191, Met220, Tyr249, His285, 305-307, 346-349, and Glu385; these read SRG and DGLR. Residue His389 participates in Zn(2+) binding. Residue Tyr412 coordinates substrate. His453 contributes to the Zn(2+) binding site. 3 residues coordinate [4Fe-4S] cluster: Cys533, Cys536, and Cys541.

It belongs to the ThiC family. As to quaternary structure, homodimer. Requires [4Fe-4S] cluster as cofactor.

It carries out the reaction 5-amino-1-(5-phospho-beta-D-ribosyl)imidazole + S-adenosyl-L-methionine = 4-amino-2-methyl-5-(phosphooxymethyl)pyrimidine + CO + 5'-deoxyadenosine + formate + L-methionine + 3 H(+). It functions in the pathway cofactor biosynthesis; thiamine diphosphate biosynthesis. Its function is as follows. Catalyzes the synthesis of the hydroxymethylpyrimidine phosphate (HMP-P) moiety of thiamine from aminoimidazole ribotide (AIR) in a radical S-adenosyl-L-methionine (SAM)-dependent reaction. This Ehrlichia chaffeensis (strain ATCC CRL-10679 / Arkansas) protein is Phosphomethylpyrimidine synthase.